A 415-amino-acid chain; its full sequence is 3-isopropylmalate dehydratase large subunit (415 aa).

Residues Cys-297, Cys-355, and Cys-358 each contribute to the [4Fe-4S] cluster site.

Belongs to the aconitase/IPM isomerase family. LeuC type 2 subfamily. As to quaternary structure, heterodimer of LeuC and LeuD. It depends on [4Fe-4S] cluster as a cofactor.

The catalysed reaction is (2R,3S)-3-isopropylmalate = (2S)-2-isopropylmalate. It participates in amino-acid biosynthesis; L-leucine biosynthesis; L-leucine from 3-methyl-2-oxobutanoate: step 2/4. Its function is as follows. Catalyzes the isomerization between 2-isopropylmalate and 3-isopropylmalate, via the formation of 2-isopropylmaleate. This Metallosphaera sedula (strain ATCC 51363 / DSM 5348 / JCM 9185 / NBRC 15509 / TH2) protein is 3-isopropylmalate dehydratase large subunit.